A 70-amino-acid chain; its full sequence is ATP synthase subunit c (70 aa).

Helical transmembrane passes span 4–24 and 47–67; these read IAAG…DGIV and FIGV…SLLV.

This sequence belongs to the ATPase C chain family. In terms of assembly, F-type ATPases have 2 components, F(1) - the catalytic core - and F(0) - the membrane proton channel. F(1) has five subunits: alpha(3), beta(3), gamma(1), delta(1), epsilon(1). F(0) has three main subunits: a(1), b(2) and c(10-14). The alpha and beta chains form an alternating ring which encloses part of the gamma chain. F(1) is attached to F(0) by a central stalk formed by the gamma and epsilon chains, while a peripheral stalk is formed by the delta and b chains.

It is found in the cell membrane. F(1)F(0) ATP synthase produces ATP from ADP in the presence of a proton or sodium gradient. F-type ATPases consist of two structural domains, F(1) containing the extramembraneous catalytic core and F(0) containing the membrane proton channel, linked together by a central stalk and a peripheral stalk. During catalysis, ATP synthesis in the catalytic domain of F(1) is coupled via a rotary mechanism of the central stalk subunits to proton translocation. In terms of biological role, key component of the F(0) channel; it plays a direct role in translocation across the membrane. A homomeric c-ring of between 10-14 subunits forms the central stalk rotor element with the F(1) delta and epsilon subunits. This is ATP synthase subunit c from Pediococcus pentosaceus (strain ATCC 25745 / CCUG 21536 / LMG 10740 / 183-1w).